The chain runs to 290 residues: 4-hydroxy-3-methylbut-2-enyl diphosphate reductase (290 aa).

Residue Cys12 coordinates [4Fe-4S] cluster. 2 residues coordinate (2E)-4-hydroxy-3-methylbut-2-enyl diphosphate: His50 and His83. Residues His50 and His83 each contribute to the dimethylallyl diphosphate site. Isopentenyl diphosphate-binding residues include His50 and His83. [4Fe-4S] cluster is bound at residue Cys105. His133 lines the (2E)-4-hydroxy-3-methylbut-2-enyl diphosphate pocket. Residue His133 participates in dimethylallyl diphosphate binding. His133 is an isopentenyl diphosphate binding site. Glu135 functions as the Proton donor in the catalytic mechanism. Thr173 contacts (2E)-4-hydroxy-3-methylbut-2-enyl diphosphate. Residue Cys202 coordinates [4Fe-4S] cluster. Residues Ser230, Asn232, and Ser274 each contribute to the (2E)-4-hydroxy-3-methylbut-2-enyl diphosphate site. Dimethylallyl diphosphate-binding residues include Ser230, Asn232, and Ser274. Ser230, Asn232, and Ser274 together coordinate isopentenyl diphosphate.

This sequence belongs to the IspH family. [4Fe-4S] cluster serves as cofactor.

It carries out the reaction isopentenyl diphosphate + 2 oxidized [2Fe-2S]-[ferredoxin] + H2O = (2E)-4-hydroxy-3-methylbut-2-enyl diphosphate + 2 reduced [2Fe-2S]-[ferredoxin] + 2 H(+). The catalysed reaction is dimethylallyl diphosphate + 2 oxidized [2Fe-2S]-[ferredoxin] + H2O = (2E)-4-hydroxy-3-methylbut-2-enyl diphosphate + 2 reduced [2Fe-2S]-[ferredoxin] + 2 H(+). It participates in isoprenoid biosynthesis; dimethylallyl diphosphate biosynthesis; dimethylallyl diphosphate from (2E)-4-hydroxy-3-methylbutenyl diphosphate: step 1/1. The protein operates within isoprenoid biosynthesis; isopentenyl diphosphate biosynthesis via DXP pathway; isopentenyl diphosphate from 1-deoxy-D-xylulose 5-phosphate: step 6/6. In terms of biological role, catalyzes the conversion of 1-hydroxy-2-methyl-2-(E)-butenyl 4-diphosphate (HMBPP) into a mixture of isopentenyl diphosphate (IPP) and dimethylallyl diphosphate (DMAPP). Acts in the terminal step of the DOXP/MEP pathway for isoprenoid precursor biosynthesis. The chain is 4-hydroxy-3-methylbut-2-enyl diphosphate reductase from Nitratidesulfovibrio vulgaris (strain ATCC 29579 / DSM 644 / CCUG 34227 / NCIMB 8303 / VKM B-1760 / Hildenborough) (Desulfovibrio vulgaris).